The sequence spans 140 residues: L-fucose mutarotase (140 aa).

Catalysis depends on His22, which acts as the Proton donor. Substrate-binding positions include Asp30, Arg107, and 129–131 (YGN).

Belongs to the RbsD / FucU family. FucU mutarotase subfamily. As to quaternary structure, homodecamer.

The protein resides in the cytoplasm. The enzyme catalyses alpha-L-fucose = beta-L-fucose. It participates in carbohydrate metabolism; L-fucose metabolism. Its function is as follows. Involved in the anomeric conversion of L-fucose. The sequence is that of L-fucose mutarotase from Salmonella arizonae (strain ATCC BAA-731 / CDC346-86 / RSK2980).